Reading from the N-terminus, the 2869-residue chain is uncharacterized protein (2869 aa).

Residues 1–10 (MNINRNNIND) are compositionally biased toward low complexity. Disordered stretches follow at residues 1-132 (MNIN…SSNK), 171-349 (NNNN…DNYR), 380-485 (FNES…TSSS), 498-517 (KEKH…KPKK), 690-812 (NQNQ…NQNQ), 860-1074 (INNN…INSN), 1108-1175 (INNI…NSNS), 1188-1216 (SNSN…VDVD), 1224-1243 (VFIV…SVKT), 1340-1448 (ESNS…GNNI), 1476-1704 (IDNC…SNYY), 1731-1832 (NSNS…NEGF), and 2725-2773 (DRVR…NNNE). A compositionally biased stretch (polar residues) spans 14-25 (HSTSFNDNFDSF). Low complexity-rich tracts occupy residues 26 to 124 (GNQN…NPKN), 171 to 348 (NNNN…YDNY), 388 to 414 (NNNT…LNNN), 421 to 446 (YYDN…QTNK), and 454 to 478 (KNNN…NSNN). A compositionally biased stretch (basic and acidic residues) spans 505 to 514 (HENGDISESK). 2 stretches are compositionally biased toward low complexity: residues 690–707 (NQNQ…QNHQ) and 714–749 (PQRQ…NQDQ). Basic and acidic residues predominate over residues 750 to 763 (YQDHDHEHEHDHDQ). The segment covering 764-781 (NQNQNQNQHQSRNQNQDQ) has biased composition (low complexity). The span at 782-795 (YQDHDHEHEHDHDQ) shows a compositional bias: basic and acidic residues. 5 stretches are compositionally biased toward low complexity: residues 796–812 (NQNQ…NQNQ), 860–891 (INNN…QSQN), 898–911 (DNRI…SSRD), 921–991 (CDFN…SFNN), and 1000–1074 (NNHN…INSN). The segment covering 1188–1212 (SNSNGFNNNNSNDQRNIDSSSNSDI) has biased composition (low complexity). Positions 1230–1243 (TSSNKSNRASSVKT) are enriched in polar residues. Low complexity-rich tracts occupy residues 1377–1448 (DNGN…GNNI) and 1476–1639 (IDNC…NDND). Acidic residues predominate over residues 1640 to 1659 (IGNDFDNDNDNDSYIDDDNN). Composition is skewed to low complexity over residues 1660-1704 (VYDN…SNYY), 1731-1823 (NSNS…NNNS), and 2739-2754 (SSSG…SGGS). A compositionally biased stretch (acidic residues) spans 2758–2773 (NLDDSENESDSENNNE).

This is an uncharacterized protein from Dictyostelium discoideum (Social amoeba).